A 281-amino-acid polypeptide reads, in one-letter code: Plasmanylethanolamine desaturase (281 aa).

Over 1–28 the chain is Cytoplasmic; the sequence is MKTQEIEKKVRQQDAQVLAQGYSPAIRA. The chain crosses the membrane as a helical span at residues 29 to 45; that stretch reads MEIAAIVSFVSLEVALV. Over 46–58 the chain is Periplasmic; that stretch reads YRLWGTPYAGTWL. The helical transmembrane segment at 59 to 75 threads the bilayer; that stretch reads LLSAVLLGYLAADFVSG. Residues 76–123 lie on the Cytoplasmic side of the membrane; the sequence is FVHWMGDTWGSTEMPVLGKALIRPFREHHVDEKAITRHDFVETNGNNC. A helical membrane pass occupies residues 124–138; it reads LISLPVAIIALCLPM. The Periplasmic portion of the chain corresponds to 139 to 142; sequence SGPG. Residues 143 to 159 traverse the membrane as a helical segment; the sequence is WVFCASFLGAMIFWVMA. Over 160–281 the chain is Cytoplasmic; that stretch reads TNQFHKWSHM…VQEKPASTRP (122 aa). Residues 164–168 carry the Histidine box-1 motif; that stretch reads HKWSH. A Histidine box-2 motif is present at residues 191 to 195; sequence HRIHH.

Belongs to the fatty acid desaturase CarF family. In terms of assembly, interacts with CarR.

Its subcellular location is the cell inner membrane. It carries out the reaction a 1-(1,2-saturated alkyl)-2-acyl-sn-glycero-3-phosphoethanolamine + 2 Fe(II)-[cytochrome b5] + O2 + 2 H(+) = a 1-O-(1Z-alkenyl)-2-acyl-sn-glycero-3-phosphoethanolamine + 2 Fe(III)-[cytochrome b5] + 2 H2O. The enzyme catalyses 1-O-(13-methyltetradecyl)-2-(13-methyltetradecanoyl)-sn-glycero-3-phosphoethanolamine + 2 Fe(II)-[cytochrome b5] + O2 + 2 H(+) = 1-O-(1Z-13-methyltetradecenyl)-2-(13-methyltetradecanoyl)-sn-glycero-3-phosphoethanolamine + 2 Fe(III)-[cytochrome b5] + 2 H2O. In terms of biological role, plasmanylethanolamine desaturase involved in plasmalogen biogenesis in the membrane, required for light-induced carotenogenesis. Plasmalogens are glycerophospholipids with a hydrocarbon chain linked by a vinyl ether bond at the glycerol sn-1 position, and are involved in antioxidative and signaling mechanisms, most precisely in sensing photooxidative stress through singlet oxygen. Participates in the light-dependent inactivation of the antisigma factor CarR. Mediates signaling by singlet oxygen, generated via photoexcited protoporphyrin IX. In Myxococcus xanthus, this protein is Plasmanylethanolamine desaturase.